A 371-amino-acid polypeptide reads, in one-letter code: Dual-specificity RNA methyltransferase RlmN (371 aa).

The active-site Proton acceptor is the Glu-86. Positions Arg-105 to Asp-338 constitute a Radical SAM core domain. Cys-112 and Cys-343 are disulfide-bonded. [4Fe-4S] cluster contacts are provided by Cys-119, Cys-123, and Cys-126. S-adenosyl-L-methionine-binding positions include Gly-169–Glu-170, Ser-201, Ser-224–His-226, and Asn-300. Catalysis depends on Cys-343, which acts as the S-methylcysteine intermediate. Residues Gln-348 to Pro-363 are compositionally biased toward polar residues. The tract at residues Gln-348–Ser-371 is disordered.

This sequence belongs to the radical SAM superfamily. RlmN family. The cofactor is [4Fe-4S] cluster.

It localises to the cytoplasm. It catalyses the reaction adenosine(2503) in 23S rRNA + 2 reduced [2Fe-2S]-[ferredoxin] + 2 S-adenosyl-L-methionine = 2-methyladenosine(2503) in 23S rRNA + 5'-deoxyadenosine + L-methionine + 2 oxidized [2Fe-2S]-[ferredoxin] + S-adenosyl-L-homocysteine. The enzyme catalyses adenosine(37) in tRNA + 2 reduced [2Fe-2S]-[ferredoxin] + 2 S-adenosyl-L-methionine = 2-methyladenosine(37) in tRNA + 5'-deoxyadenosine + L-methionine + 2 oxidized [2Fe-2S]-[ferredoxin] + S-adenosyl-L-homocysteine. In terms of biological role, specifically methylates position 2 of adenine 2503 in 23S rRNA and position 2 of adenine 37 in tRNAs. m2A2503 modification seems to play a crucial role in the proofreading step occurring at the peptidyl transferase center and thus would serve to optimize ribosomal fidelity. The polypeptide is Dual-specificity RNA methyltransferase RlmN (Campylobacter curvus (strain 525.92)).